Here is a 164-residue protein sequence, read N- to C-terminus: MVDDSTRKTLSNIPLLQIRAGPREKDVWVQRLKEEYQALIKYVENNKQSGSDWFRLESNKEGTKWFGKCWYMHNLLKYEFDVEFDIPVTYPTTAPEIALPELDGKTAKMYRGGKICLTDHFKPLWARNVPKFGIAHAMALGLAPWLAVEIPDLIEKGIITYKEK.

Catalysis depends on Cys-116, which acts as the Glycyl thioester intermediate.

It belongs to the ubiquitin-conjugating enzyme family. UFC1 subfamily.

In terms of biological role, E2-like enzyme which forms an intermediate with UFM1 via a thioester linkage. This chain is Ubiquitin-fold modifier-conjugating enzyme 1, found in Drosophila erecta (Fruit fly).